We begin with the raw amino-acid sequence, 406 residues long: Succinylornithine transaminase (406 aa).

Lysine 252 is modified (N6-(pyridoxal phosphate)lysine).

This sequence belongs to the class-III pyridoxal-phosphate-dependent aminotransferase family. AstC subfamily. It depends on pyridoxal 5'-phosphate as a cofactor.

It catalyses the reaction N(2)-succinyl-L-ornithine + 2-oxoglutarate = N-succinyl-L-glutamate 5-semialdehyde + L-glutamate. The protein operates within amino-acid degradation; L-arginine degradation via AST pathway; L-glutamate and succinate from L-arginine: step 3/5. Functionally, catalyzes the transamination of N(2)-succinylornithine and alpha-ketoglutarate into N(2)-succinylglutamate semialdehyde and glutamate. Can also act as an acetylornithine aminotransferase. The protein is Succinylornithine transaminase of Escherichia coli O127:H6 (strain E2348/69 / EPEC).